Consider the following 86-residue polypeptide: Cell division topological specificity factor (86 aa).

Belongs to the MinE family.

Its function is as follows. Prevents the cell division inhibition by proteins MinC and MinD at internal division sites while permitting inhibition at polar sites. This ensures cell division at the proper site by restricting the formation of a division septum at the midpoint of the long axis of the cell. The sequence is that of Cell division topological specificity factor from Photobacterium profundum (strain SS9).